The following is a 291-amino-acid chain: Acidic endochitinase (291 aa).

The signal sequence occupies residues 1–22 (MIKYSFLLTALVLFLRALKLEA). The GH18 domain maps to 23 to 291 (GDIVIYWGQN…GYSSAIKANV (269 aa)). Cystine bridges form between cysteine 42–cysteine 89 and cysteine 72–cysteine 79. Glutamate 149 (proton donor) is an active-site residue. A disulfide bridge connects residues cysteine 180 and cysteine 209.

Belongs to the glycosyl hydrolase 18 family. Chitinase class II subfamily.

It is found in the secreted. It localises to the cell wall. It carries out the reaction Random endo-hydrolysis of N-acetyl-beta-D-glucosaminide (1-&gt;4)-beta-linkages in chitin and chitodextrins.. Its function is as follows. This protein functions as a defense against chitin containing fungal pathogens. In Nicotiana tabacum (Common tobacco), this protein is Acidic endochitinase.